A 172-amino-acid chain; its full sequence is MMKFMCICLCAISAVSANSYGRSRGGYGGAPVGGYAYQVQPALTVKAIVPSYGGGYGGNHGGYGGAYESVPVPVSSAYSGANVGSQYSGSGYGGAPPVDAQAIALAKLALAAPSAGAPLVWKEAPRYAQPVYPPTSYVNQEYGHSEKVKGGSAAAAASSVAAGKKGYKRPSY.

An N-terminal signal peptide occupies residues 1–17 (MMKFMCICLCAISAVSA).

This sequence belongs to the chorion protein S15/S18 family.

Its subcellular location is the secreted. In terms of biological role, chorion membrane (egg shell) protein; plays a role in protecting the egg from the environment. The chain is Chorion protein S18 (Cp18) from Drosophila melanogaster (Fruit fly).